A 191-amino-acid polypeptide reads, in one-letter code: Pyridoxal 5'-phosphate synthase subunit PdxT (191 aa).

52–54 (GES) is a binding site for L-glutamine. Cys-81 (nucleophile) is an active-site residue. L-glutamine-binding positions include Arg-108 and 136–137 (IR). Residues His-172 and Glu-174 each act as charge relay system in the active site.

The protein belongs to the glutaminase PdxT/SNO family. In the presence of PdxS, forms a dodecamer of heterodimers. Only shows activity in the heterodimer.

It carries out the reaction aldehydo-D-ribose 5-phosphate + D-glyceraldehyde 3-phosphate + L-glutamine = pyridoxal 5'-phosphate + L-glutamate + phosphate + 3 H2O + H(+). The catalysed reaction is L-glutamine + H2O = L-glutamate + NH4(+). Its pathway is cofactor biosynthesis; pyridoxal 5'-phosphate biosynthesis. Catalyzes the hydrolysis of glutamine to glutamate and ammonia as part of the biosynthesis of pyridoxal 5'-phosphate. The resulting ammonia molecule is channeled to the active site of PdxS. In Actinobacillus pleuropneumoniae serotype 5b (strain L20), this protein is Pyridoxal 5'-phosphate synthase subunit PdxT.